Consider the following 362-residue polypeptide: 3-dehydroquinate synthase (362 aa).

NAD(+) contacts are provided by residues 72-77 (DGEQYK), 106-110 (GVVGD), 130-131 (TT), Lys-143, Lys-152, and 170-173 (CLKT). Zn(2+)-binding residues include Glu-185, His-248, and His-265.

It belongs to the sugar phosphate cyclases superfamily. Dehydroquinate synthase family. Co(2+) serves as cofactor. The cofactor is Zn(2+). NAD(+) is required as a cofactor.

The protein resides in the cytoplasm. It catalyses the reaction 7-phospho-2-dehydro-3-deoxy-D-arabino-heptonate = 3-dehydroquinate + phosphate. Its pathway is metabolic intermediate biosynthesis; chorismate biosynthesis; chorismate from D-erythrose 4-phosphate and phosphoenolpyruvate: step 2/7. Its function is as follows. Catalyzes the conversion of 3-deoxy-D-arabino-heptulosonate 7-phosphate (DAHP) to dehydroquinate (DHQ). The polypeptide is 3-dehydroquinate synthase (Aliivibrio fischeri (strain ATCC 700601 / ES114) (Vibrio fischeri)).